Consider the following 244-residue polypeptide: Ras-related protein Rab-12 (244 aa).

M1 is subject to N-acetylmethionine. Low complexity predominate over residues 1-10; it reads MDPGAALQRR. A disordered region spans residues 1-37; it reads MDPGAALQRRAGGGGGLGAGSPALSGGQGRRRKQPPR. A phosphoserine mark is found at S21 and S25. G52 serves as a coordination point for GDP. GTP-binding residues include G52, V53, G54, K55, and T56. 4 residues coordinate GDP: G54, K55, T56, and S57. T56 contributes to the Mg(2+) binding site. Short sequence motifs (switch) lie at residues 65–79 and 97–114; these read DTFC…GVDF and DTAG…YYRS. S73 and T74 together coordinate GTP. Mg(2+) contacts are provided by T74 and D97. A GTP-binding site is contributed by G100. S106 is modified (phosphoserine; by LRRK2). GDP is bound by residues N155, K156, D158, and C159. Residues N155, K156, and D158 each coordinate GTP. The GTP site is built by S186, A187, and K188. Residues A187 and K188 each contribute to the GDP site. The tract at residues 225–244 is disordered; the sequence is QPEPEIPPELPPPRPHVRCC. Residues 228-238 show a composition bias toward pro residues; that stretch reads PEIPPELPPPR. 2 S-geranylgeranyl cysteine lipidation sites follow: C243 and C244.

The protein belongs to the small GTPase superfamily. Rab family. In terms of assembly, interacts with RABIF. Interacts with OPTN. Interacts with LRRK2; interaction facilitates phosphorylation of Ser-106. Interacts with GDI1, GDI2, CHM and CHML; these interactions are disrupted by phosphorylation on Ser-106. Interacts with RILPL1 and RILPL2; these interactions are dependent on phosphorylation of Ser-106. Mg(2+) serves as cofactor. Post-translationally, phosphorylation of Ser-106 in the switch II region by LRRK2 prevents the association of RAB regulatory proteins, including CHM, CHML and RAB GDP dissociation inhibitors GDI1 and GDI2.

It localises to the recycling endosome membrane. The protein resides in the lysosome membrane. The protein localises to the golgi apparatus membrane. Its subcellular location is the cytoplasmic vesicle. It is found in the autophagosome. It catalyses the reaction GTP + H2O = GDP + phosphate + H(+). With respect to regulation, regulated by guanine nucleotide exchange factors (GEFs) including DENND3 which promote the exchange of bound GDP for free GTP. Regulated by GTPase activating proteins (GAPs) which increase the GTP hydrolysis activity. Inhibited by GDP dissociation inhibitors (GDIs). Its function is as follows. The small GTPases Rab are key regulators of intracellular membrane trafficking, from the formation of transport vesicles to their fusion with membranes. Rabs cycle between an inactive GDP-bound form and an active GTP-bound form that is able to recruit to membranes different sets of downstream effectors directly responsible for vesicle formation, movement, tethering and fusion. RAB12 may play a role in protein transport from recycling endosomes to lysosomes regulating, for instance, the degradation of the transferrin receptor. Involved in autophagy. The protein is Ras-related protein Rab-12 of Homo sapiens (Human).